A 349-amino-acid polypeptide reads, in one-letter code: Protein Wnt-7a (349 aa).

The first 31 residues, 1–31 (MNRKARRCLGHLFLSLGMVYLRIGGFSSVVA), serve as a signal peptide directing secretion. Cystine bridges form between Cys73-Cys84, Cys123-Cys131, Cys133-Cys152, Cys200-Cys214, and Cys202-Cys209. N-linked (GlcNAc...) asparagine glycosylation is found at Asn83 and Asn127. Ser206 is lipidated: O-palmitoleoyl serine; by PORCN. The segment at 238–266 (VEPVRASRNKRPTFLKIKKPLSYRKPMDT) is disordered linker. 6 cysteine pairs are disulfide-bonded: Cys278-Cys309, Cys294-Cys304, Cys308-Cys348, Cys324-Cys339, Cys326-Cys336, and Cys331-Cys332. N-linked (GlcNAc...) asparagine glycosylation is present at Asn295.

Belongs to the Wnt family. In terms of assembly, forms a soluble 1:1 complex with AFM; this prevents oligomerization and is required for prolonged biological activity. The complex with AFM may represent the physiological form in body fluids. Interacts with PORCN. Interacts (via intrinsically disordered linker region) with RECK; interaction with RECK confers ligand selectivity for Wnt7 in brain endothelial cells and allows these cells to selectively respond to Wnt7. Interacts with FZD5. Palmitoleoylation is required for efficient binding to frizzled receptors. Depalmitoleoylation leads to Wnt signaling pathway inhibition.

It localises to the secreted. The protein localises to the extracellular space. The protein resides in the extracellular matrix. Functionally, ligand for members of the frizzled family of seven transmembrane receptors that functions in the canonical Wnt/beta-catenin signaling pathway. Plays an important role in embryonic development, including dorsal versus ventral patterning during limb development, skeleton development and urogenital tract development. Required for central nervous system (CNS) angiogenesis and blood-brain barrier regulation. Required for normal, sexually dimorphic development of the Mullerian ducts, and for normal fertility in both sexes. Required for normal neural stem cell proliferation in the hippocampus dentate gyrus. Required for normal progress through the cell cycle in neural progenitor cells, for self-renewal of neural stem cells, and for normal neuronal differentiation and maturation. Promotes formation of synapses via its interaction with FZD5. This Pongo pygmaeus (Bornean orangutan) protein is Protein Wnt-7a (WNT7A).